Reading from the N-terminus, the 379-residue chain is UDP-4-amino-4-deoxy-L-arabinose--oxoglutarate aminotransferase (379 aa).

Residue lysine 182 is modified to N6-(pyridoxal phosphate)lysine.

The protein belongs to the DegT/DnrJ/EryC1 family. ArnB subfamily. As to quaternary structure, homodimer. It depends on pyridoxal 5'-phosphate as a cofactor.

It carries out the reaction UDP-4-amino-4-deoxy-beta-L-arabinose + 2-oxoglutarate = UDP-beta-L-threo-pentopyranos-4-ulose + L-glutamate. It participates in nucleotide-sugar biosynthesis; UDP-4-deoxy-4-formamido-beta-L-arabinose biosynthesis; UDP-4-deoxy-4-formamido-beta-L-arabinose from UDP-alpha-D-glucuronate: step 2/3. Its pathway is bacterial outer membrane biogenesis; lipopolysaccharide biosynthesis. Catalyzes the conversion of UDP-4-keto-arabinose (UDP-Ara4O) to UDP-4-amino-4-deoxy-L-arabinose (UDP-L-Ara4N). The modified arabinose is attached to lipid A and is required for resistance to polymyxin and cationic antimicrobial peptides. The polypeptide is UDP-4-amino-4-deoxy-L-arabinose--oxoglutarate aminotransferase (Salmonella dublin (strain CT_02021853)).